The chain runs to 59 residues: Photosystem II reaction center protein K (59 aa).

Residues 1–22 (MLNIFSLICLNSALYPSSLFFA) constitute a propeptide that is removed on maturation. A helical membrane pass occupies residues 38-58 (MPVIPLFFFLLAFVWQAAVSF).

This sequence belongs to the PsbK family. In terms of assembly, PSII is composed of 1 copy each of membrane proteins PsbA, PsbB, PsbC, PsbD, PsbE, PsbF, PsbH, PsbI, PsbJ, PsbK, PsbL, PsbM, PsbT, PsbX, PsbY, PsbZ, Psb30/Ycf12, at least 3 peripheral proteins of the oxygen-evolving complex and a large number of cofactors. It forms dimeric complexes.

It localises to the plastid. It is found in the chloroplast thylakoid membrane. In terms of biological role, one of the components of the core complex of photosystem II (PSII). PSII is a light-driven water:plastoquinone oxidoreductase that uses light energy to abstract electrons from H(2)O, generating O(2) and a proton gradient subsequently used for ATP formation. It consists of a core antenna complex that captures photons, and an electron transfer chain that converts photonic excitation into a charge separation. The sequence is that of Photosystem II reaction center protein K from Lactuca sativa (Garden lettuce).